A 261-amino-acid polypeptide reads, in one-letter code: Aquaporin-8 (261 aa).

Over 1-36 (MSGEQTPMCSMDLPEVKVKTSMAGRCRVFWYEQYVQ) the chain is Cytoplasmic. A helical membrane pass occupies residues 37–57 (PCIVELVGSALFIFIGCLSVI). Cys53 is subject to Cysteine persulfide. Position 53 is a cysteine sulfenic acid (-SOH) (Cys53). At 58-84 (ENSPNTGLLQPALAHGLALGLIIATLG) the chain is on the extracellular side. Residues 85 to 105 (NISGGHFNPAVSLAVTVIGGL) form a helical membrane-spanning segment. Residues 92-94 (NPA) carry the NPA 1 motif. At 106–107 (KT) the chain is on the cytoplasmic side. The chain crosses the membrane as a helical span at residues 108 to 128 (MLLIPYWISQLFGGLIGAALA). At 129 to 156 (KVVSPEERFWNASGAAFAIVQEQEQVAE) the chain is on the extracellular side. The N-linked (GlcNAc...) asparagine glycan is linked to Asn139. Residues 157–177 (ALGIEIILTMLLVLAVCMGAV) form a helical membrane-spanning segment. Residues 178 to 183 (NEKTMG) lie on the Cytoplasmic side of the membrane. Residues 184–204 (PLAPFSIGFSVIVDILAGGSI) traverse the membrane as a helical segment. The Extracellular portion of the chain corresponds to 205-228 (SGACMNPARAFGPAVMAGYWDFHW). The NPA 2 signature appears at 210–212 (NPA). Residues 229 to 249 (IYWLGPLLAGLFVGLLIRLLI) traverse the membrane as a helical segment. Topologically, residues 250–261 (GDEKTRLILKSR) are cytoplasmic.

Belongs to the MIP/aquaporin (TC 1.A.8) family. Sulfenylation at Cys-53(C53-SOH) when hydrogen peroxide flows through the AQP8 channel, making it susceptible to hydrogen sulfide produced by CBS. Post-translationally, persulfidation at Cys-53 is required to gate AQP8 channel; under stress condition, hydrogen peroxide accumulates in the cell leading to CBS activation that produces hydrogen sulfide inducing persulfidation of oxidized Cys-53 (C53-SOH). In terms of processing, N-glycosylated. As to expression, expressed in placenta. Highly expressed in the epithelial layer of gall-bladders. Expressed in heart, kidney, submandibular gland, liver, small intestine, colon, testes, and epididymis. In testes, expressed in spermatogenic cells.

It is found in the cell membrane. The protein resides in the mitochondrion inner membrane. Its subcellular location is the apical cell membrane. It localises to the basolateral cell membrane. The protein localises to the smooth endoplasmic reticulum membrane. The catalysed reaction is H2O(in) = H2O(out). The enzyme catalyses urea(in) = urea(out). It carries out the reaction NH4(+)(in) = NH4(+)(out). It catalyses the reaction H2O2(out) = H2O2(in). The catalysed reaction is formamide(out) = formamide(in). The enzyme catalyses methylamine(out) = methylamine(in). Reversibly gated by a two-step sulfenylation-persulfidation process in cells undergoing diverse stresses. Functionally, channel that allows the facilitated permeation of water and uncharged molecules, such as hydrogen peroxide and the neutral form of ammonia (NH3), through cellular membranes such as plasma membrane, inner mitochondrial membrane and endoplasmic reticulum membrane of several tissues. The transport of ammonia neutral form induces a parallel transport of proton, at alkaline pH when the concentration of ammonia is high. However, it is unclear whether the transport of proton takes place via the aquaporin or via an endogenous pathway. Also, may transport ammonia analogs such as formamide and methylamine, a transport favourited at basic pH due to the increase of unprotonated (neutral) form, which is expected to favor diffusion. In vitro, may be also permeable to urea but not to glycerol. Does not transport urea or glycerol. The water transport mechanism is mercury- and copper-sensitive and passive in response to osmotic driving forces. At the canicular plasma membrane, mediates the osmotic transport of water toward the bile canaliculus and facilitates the cAMP-induced bile canalicular water secretion, a process involved in bile formation. In addition, mediates the hydrogen peroxide release from hepatocyte mitochondria that modulates the SREBF2-mediated cholesterol synthesis and facilitates the mitochondrial ammonia uptake which is metabolized into urea, mainly under glucagon stimulation. In B cells, transports the CYBB-generated hydrogen peroxide from the external leaflet of the plasma membrane to the cytosol to promote B cell activation and differentiation for signal amplification. In the small intestine and colon system, mediates water transport through mitochondria and apical membrane of epithelial cells. May play an important role in the adaptive response of proximal tubule cells to acidosis possibly facilitating mitochondrial ammonia transport. This chain is Aquaporin-8, found in Mus musculus (Mouse).